Reading from the N-terminus, the 346-residue chain is Elongation factor Ts (346 aa).

The interval 80 to 83 (TDFV) is involved in Mg(2+) ion dislocation from EF-Tu.

Belongs to the EF-Ts family.

The protein resides in the cytoplasm. Associates with the EF-Tu.GDP complex and induces the exchange of GDP to GTP. It remains bound to the aminoacyl-tRNA.EF-Tu.GTP complex up to the GTP hydrolysis stage on the ribosome. This chain is Elongation factor Ts, found in Streptococcus pyogenes serotype M18 (strain MGAS8232).